The sequence spans 90 residues: MKMVYLGLFLIITSCVISSGNLIYECRWVDTIRVKDPTNELCQKKCEETFTGRITVKHGYASSERRCACYGEKVLETPYPSDGVKDCNRI.

An N-terminal signal peptide occupies residues 1 to 18 (MKMVYLGLFLIITSCVIS).

The protein belongs to the scoloptoxin-15 family. Post-translationally, contains 3 disulfide bonds. In terms of tissue distribution, expressed by the venom gland.

It localises to the secreted. This is U-scoloptoxin(15)-Sa3a from Scolopendra alternans (Florida Keys giant centipede).